Here is a 336-residue protein sequence, read N- to C-terminus: Glutamyl endopeptidase (336 aa).

The first 29 residues, 1-29 (MKGKFLKVSSLFVATLTTATLVSSPAANA), serve as a signal peptide directing secretion. A propeptide spanning residues 30 to 68 (LSSKAMDNHPQQTQSSKQQTPKIQKGGNLKPLEQREHAN) is cleaved from the precursor. The disordered stretch occupies residues 34–61 (AMDNHPQQTQSSKQQTPKIQKGGNLKPL). The span at 39 to 51 (PQQTQSSKQQTPK) shows a compositional bias: low complexity. Catalysis depends on charge relay system residues H119, D161, and S237. The disordered stretch occupies residues 283-336 (FANDDQPNNPDNPDNPNNPDNPNNPDEPNNPDNPNNPDNPDNGDNNNSDNPDAA). A compositionally biased stretch (low complexity) spans 286-336 (DDQPNNPDNPDNPNNPDNPNNPDEPNNPDNPNNPDNPDNGDNNNSDNPDAA). Repeat copies occupy residues 289-291 (PNN), 292-294 (PDN), 295-297 (PDN), 298-300 (PNN), 301-303 (PDN), 304-306 (PNN), 310-312 (PNN), 313-315 (PDN), 316-318 (PNN), 319-321 (PDN), and 322-324 (PDN). Positions 289–324 (PNNPDNPDNPNNPDNPNNPDEPNNPDNPNNPDNPDN) are 11 X 3 AA repeats of P-[DN]-N.

The protein belongs to the peptidase S1B family. In terms of processing, proteolytically cleaved by aureolysin (aur). This cleavage leads to the activation of SspA.

It is found in the secreted. It carries out the reaction Preferential cleavage: Glu-|-Xaa, Asp-|-Xaa.. In terms of biological role, preferentially cleaves peptide bonds on the carboxyl-terminal side of aspartate and glutamate. Along with other extracellular proteases it is involved in colonization and infection of human tissues. Required for proteolytic maturation of thiol protease SspB and inactivation of SspC, an inhibitor of SspB. It is the most important protease for degradation of fibronectin-binding protein (FnBP) and surface protein A, which are involved in adherence to host cells. May also protect bacteria against host defense mechanism by cleaving the immunoglobulin classes IgG, IgA and IgM. May be involved in the stability of secreted lipases. The chain is Glutamyl endopeptidase (sspA) from Staphylococcus aureus (strain NCTC 8325 / PS 47).